We begin with the raw amino-acid sequence, 934 residues long: Progesterone receptor (934 aa).

A disordered region spans residues Met-1–Ser-49. The AF3; mediates transcriptional activation stretch occupies residues Met-1–Leu-164. Positions Met-1–Ile-567 are modulating, Pro-Rich. Position 20 is a phosphoserine (Ser-20). The LXXL motif 1 motif lies at Leu-55–Leu-59. Residues Pro-61–Gly-239 form a disordered region. At Ser-81 the chain carries Phosphoserine. The LXXL motif 2 motif lies at Leu-115–Leu-119. Residues Ser-130 and Ser-162 each carry the phosphoserine modification. The interval Met-165 to His-305 is mediates transcriptional transrepression. Residues Lys-183 to Arg-187 carry the Nuclear localization signal motif. Residue Ser-190 is modified to Phosphoserine. Residues Pro-191 to Pro-203 show a composition bias toward polar residues. A Phosphoserine modification is found at Ser-213. The segment covering Glu-220–Asp-231 has biased composition (acidic residues). Position 294 is a phosphoserine; by MAPK1 (Ser-294). The disordered stretch occupies residues Gly-331–Pro-375. The span at Ala-335–Ser-350 shows a compositional bias: low complexity. Ser-345 is modified (phosphoserine; by MAPK). Residue Lys-388 forms a Glycyl lysine isopeptide (Lys-Gly) (interchain with G-Cter in SUMO); alternate linkage. Residue Lys-388 forms a Glycyl lysine isopeptide (Lys-Gly) (interchain with G-Cter in ubiquitin); alternate linkage. Residue Ser-400 is modified to Phosphoserine; by CDK2. Residues Pro-415–Pro-454 are disordered. Pro residues predominate over residues Pro-418–Arg-433. A compositionally biased stretch (low complexity) spans Pro-434–Pro-454. The AF1; mediates transcriptional activation stretch occupies residues Ser-456 to Arg-547. Residue Lys-532 forms a Glycyl lysine isopeptide (Lys-Gly) (interchain with G-Cter in SUMO) linkage. 2 NR C4-type zinc fingers span residues Cys-568–Cys-588 and Cys-604–Cys-628. A DNA-binding region (nuclear receptor) is located at residues Cys-568 to Phe-640. Position 677 is a phosphoserine (Ser-677). The region spanning Gln-680–Ile-914 is the NR LBD domain. The interval Leu-688–Lys-934 is AF2; mediates transcriptional activation. A progesterone-binding site is contributed by Arg-767.

This sequence belongs to the nuclear hormone receptor family. As to quaternary structure, interacts with SMARD1 and UNC45A. Interacts with CUEDC2; the interaction promotes ubiquitination, decreases sumoylation, and represses transcriptional activity. Interacts with PIAS3; the interaction promotes sumoylation of PR in a hormone-dependent manner, inhibits DNA-binding, and alters nuclear export. Interacts with SP1; the interaction requires ligand-induced phosphorylation on Ser-345 by ERK1/2-MAPK. Interacts with PRMT2. Interacts with NCOA2 and NCOA1. Interacts with KLF9. Interacts with GTF2B. Phosphorylated on multiple serine sites. Several of these sites are hormone-dependent. Phosphorylation on Ser-294 is highly hormone-dependent and modulates ubiquitination and sumoylation on Lys-388. Phosphorylation on Ser-345 also requires induction by hormone. Basal phosphorylation on Ser-81, Ser-162, Ser-190 and Ser-400 is increased in response to progesterone and can be phosphorylated in vitro by the CDK2-A1 complex. Increased levels of phosphorylation on Ser-400 also in the presence of EGF, heregulin, IGF, PMA and FBS. Phosphorylation at this site by CDK2 is ligand-independent, and increases nuclear translocation and transcriptional activity. Phosphorylation at Ser-162 and Ser-294, but not at Ser-190, is impaired during the G(2)/M phase of the cell cycle. Phosphorylation on Ser-345 by ERK1/2 MAPK is required for interaction with SP1. Post-translationally, sumoylation is hormone-dependent and represses transcriptional activity. Sumoylation on all three sites is enhanced by PIAS3. Desumoylated by SENP1. Sumoylation on Lys-388, the main site of sumoylation, is repressed by ubiquitination on the same site, and modulated by phosphorylation at Ser-294. In terms of processing, ubiquitination is hormone-dependent and represses sumoylation on the same site. Promoted by MAPK-mediated phosphorylation on Ser-294. Ubiquitinated by UBR5, leading to its degradation: UBR5 specifically recognizes and binds ligand-bound PGR when it is not associated with coactivators (NCOAs). In presence of NCOAs, the UBR5-degron is not accessible, preventing its ubiquitination and degradation. Palmitoylated by ZDHHC7 and ZDHHC21. Palmitoylation is required for plasma membrane targeting and for rapid intracellular signaling via ERK and AKT kinases and cAMP generation.

It is found in the nucleus. Its subcellular location is the cytoplasm. In terms of biological role, the steroid hormones and their receptors are involved in the regulation of eukaryotic gene expression and affect cellular proliferation and differentiation in target tissues. Transcriptional activator of several progesteron-dependent promoters in a variety of cell types. Involved in activation of SRC-dependent MAPK signaling on hormone stimulation. This Colobus guereza (Mantled guereza) protein is Progesterone receptor (PGR).